Here is a 290-residue protein sequence, read N- to C-terminus: Agroclavine dehydrogenase (290 aa).

It belongs to the fgaFS/easG family. Monomer.

The catalysed reaction is agroclavine + NADP(+) = didehydroagroclavine + NADPH + H(+). It functions in the pathway alkaloid biosynthesis; ergot alkaloid biosynthesis. Functionally, agroclavine dehydrogenase; part of the gene cluster that mediates the biosynthesis of fungal ergot alkaloid. DmaW catalyzes the first step of ergot alkaloid biosynthesis by condensing dimethylallyl diphosphate (DMAP) and tryptophan to form 4-dimethylallyl-L-tryptophan. The second step is catalyzed by the methyltransferase easF that methylates 4-dimethylallyl-L-tryptophan in the presence of S-adenosyl-L-methionine, resulting in the formation of 4-dimethylallyl-L-abrine. The catalase easC and the FAD-dependent oxidoreductase easE then transform 4-dimethylallyl-L-abrine to chanoclavine-I which is further oxidized by easD in the presence of NAD(+), resulting in the formation of chanoclavine-I aldehyde. Agroclavine dehydrogenase easG then mediates the conversion of chanoclavine-I aldehyde to agroclavine via a non-enzymatic adduct reaction: the substrate is an iminium intermediate that is formed spontaneously from chanoclavine-I aldehyde in the presence of glutathione. The presence of easA is not required to complete this reaction. Further conversion of agroclavine to paspalic acid is a two-step process involving oxidation of agroclavine to elymoclavine and of elymoclavine to paspalic acid, the second step being performed by the elymoclavine oxidase cloA. Paspalic acid is then further converted to D-lysergic acid. Ergopeptines are assembled from D-lysergic acid and three different amino acids by the D-lysergyl-peptide-synthetases composed each of a monomudular and a trimodular nonribosomal peptide synthetase subunit. LpsB and lpsC encode the monomodular subunits responsible for D-lysergic acid activation and incorporation into the ergopeptine backbone. LpsA1 and A2 subunits encode the trimodular nonribosomal peptide synthetase assembling the tripeptide portion of ergopeptines. LpsA1 is responsible for formation of the major ergopeptine, ergotamine, and lpsA2 for alpha-ergocryptine, the minor ergopeptine of the total alkaloid mixture elaborated by C.purpurea. D-lysergyl-tripeptides are assembled by the nonribosomal peptide synthetases and released as N-(D-lysergyl-aminoacyl)-lactams. Cyclolization of the D-lysergyl-tripeptides is performed by the Fe(2+)/2-ketoglutarate-dependent dioxygenase easH which introduces a hydroxyl group into N-(D-lysergyl-aminoacyl)-lactam at alpha-C of the aminoacyl residue followed by spontaneous condensation with the terminal lactam carbonyl group. The sequence is that of Agroclavine dehydrogenase from Claviceps purpurea (strain 20.1) (Ergot fungus).